A 116-amino-acid chain; its full sequence is Appetite-regulating hormone (116 aa).

Residues 1-23 (MPAPRTICSLLLLSMLWMDLAMA) form the signal peptide. Ser-26 carries the O-decanoyl serine; alternate lipid modification. Ser-26 is lipidated: O-hexanoyl serine; alternate. Ser-26 carries O-octanoyl serine; alternate lipidation. Positions 29-67 (SPEHQKLQRKEPKKPSGRLKPRALEGQFDPDVGSQEEGA) are disordered. Over residues 31-42 (EHQKLQRKEPKK) the composition is skewed to basic and acidic residues. A propeptide spans 51-74 (ALEGQFDPDVGSQEEGAEDELEIR) (removed in mature form). Leu-97 is modified (leucine amide). A propeptide spans 98–116 (GKFLQDILWEEAEETLADE) (removed in mature form).

It belongs to the motilin family. O-octanoylated by GOAT/MBOAT4. O-octanoylation is essential for ghrelin activity. In terms of processing, amidation of Leu-97 is essential for obestatin activity.

It is found in the secreted. Its function is as follows. Ghrelin is the ligand for growth hormone secretagogue receptor type 1 (GHSR). Induces the release of growth hormone from the pituitary. Has an appetite-stimulating effect, induces adiposity and stimulates gastric acid secretion. Involved in growth regulation. Obestatin may be the ligand for GPR39. May have an appetite-reducing effect resulting in decreased food intake. May reduce gastric emptying activity and jejunal motility. This Capra hircus (Goat) protein is Appetite-regulating hormone (GHRL).